The primary structure comprises 130 residues: kinetoplast-associated protein 2-1 (130 aa).

A propeptide spanning residues 1 to 10 (MLRRTVSNFA) is cleaved from the precursor. The interval 89–130 (LTKKWNETKQAQREKAQKAQKKTKSAKSKVKKAAKKSKKSKK) is disordered. The segment covering 92 to 105 (KWNETKQAQREKAQ) has biased composition (basic and acidic residues). The span at 106-130 (KAQKKTKSAKSKVKKAAKKSKKSKK) shows a compositional bias: basic residues.

This sequence belongs to the KAP family. Associates with the kinetoplast DNA network.

It localises to the mitochondrion matrix. Its subcellular location is the kinetoplast. Functionally, histone H1-like DNA-binding protein involved in the organization and segregation of kinetoplast DNA (kDNA). The mitochondrial DNA of kinetoplastid protozoa consists of about 5,000 minicircles and 20 to 30 maxicircles. These circular DNAs are held together by catenation into a highly organized compact disk structure referred to as a kinetoplast DNA (kDNA) network. Binds preferentially to a specific fragment of minicircle DNA and is able to compact kDNA networks through DNA charge neutralization and condensation. This chain is kinetoplast-associated protein 2-1 (KAP2-1), found in Crithidia fasciculata.